Here is a 727-residue protein sequence, read N- to C-terminus: Catalase-peroxidase (727 aa).

Residues 1–24 (MDQKSDSAGKCPVAHTAPRGRSNR) form a disordered region. Residues 95–217 (WHSAGTYRIT…LAAVQMGLIY (123 aa)) constitute a cross-link (tryptophyl-tyrosyl-methioninium (Trp-Tyr) (with M-243)). H96 acts as the Proton acceptor in catalysis. Positions 217–243 (YVNPEGPNGNPDPVAAARDIRETFARM) form a cross-link, tryptophyl-tyrosyl-methioninium (Tyr-Met) (with W-95). H258 is a heme b binding site.

The protein belongs to the peroxidase family. Peroxidase/catalase subfamily. As to quaternary structure, homodimer or homotetramer. Requires heme b as cofactor. In terms of processing, formation of the three residue Trp-Tyr-Met cross-link is important for the catalase, but not the peroxidase activity of the enzyme.

It catalyses the reaction H2O2 + AH2 = A + 2 H2O. The enzyme catalyses 2 H2O2 = O2 + 2 H2O. Functionally, bifunctional enzyme with both catalase and broad-spectrum peroxidase activity. In Rhizobium meliloti (strain 1021) (Ensifer meliloti), this protein is Catalase-peroxidase.